A 463-amino-acid chain; its full sequence is Exodeoxyribonuclease 7 large subunit (463 aa).

The protein belongs to the XseA family. In terms of assembly, heterooligomer composed of large and small subunits.

The protein localises to the cytoplasm. It catalyses the reaction Exonucleolytic cleavage in either 5'- to 3'- or 3'- to 5'-direction to yield nucleoside 5'-phosphates.. Functionally, bidirectionally degrades single-stranded DNA into large acid-insoluble oligonucleotides, which are then degraded further into small acid-soluble oligonucleotides. This Bordetella bronchiseptica (strain ATCC BAA-588 / NCTC 13252 / RB50) (Alcaligenes bronchisepticus) protein is Exodeoxyribonuclease 7 large subunit.